We begin with the raw amino-acid sequence, 440 residues long: Putative epoxide hydrolase (440 aa).

The disordered stretch occupies residues 1–21 (MTKTLAEQPGEGAAPVSPSPS). The tat-type signal signal peptide spans 1–49 (MTKTLAEQPGEGAAPVSPSPSRRALLHGAAGLGALAAGAAVAGPGLAFA).

It belongs to the peptidase S33 family. Post-translationally, predicted to be exported by the Tat system. The position of the signal peptide cleavage has not been experimentally proven.

The catalysed reaction is an epoxide + H2O = an ethanediol. The polypeptide is Putative epoxide hydrolase (Stigmatella aurantiaca (strain DW4/3-1)).